Reading from the N-terminus, the 362-residue chain is 3-dehydroquinate synthase (362 aa).

NAD(+) contacts are provided by residues 71 to 76 (DGEKYK), 105 to 109 (GVIGD), 129 to 130 (TT), Lys-142, and Lys-151. 3 residues coordinate Zn(2+): Glu-184, His-248, and His-265.

The protein belongs to the sugar phosphate cyclases superfamily. Dehydroquinate synthase family. Co(2+) is required as a cofactor. Zn(2+) serves as cofactor. Requires NAD(+) as cofactor.

The protein resides in the cytoplasm. It catalyses the reaction 7-phospho-2-dehydro-3-deoxy-D-arabino-heptonate = 3-dehydroquinate + phosphate. The protein operates within metabolic intermediate biosynthesis; chorismate biosynthesis; chorismate from D-erythrose 4-phosphate and phosphoenolpyruvate: step 2/7. Its function is as follows. Catalyzes the conversion of 3-deoxy-D-arabino-heptulosonate 7-phosphate (DAHP) to dehydroquinate (DHQ). The polypeptide is 3-dehydroquinate synthase (Hamiltonella defensa subsp. Acyrthosiphon pisum (strain 5AT)).